The following is a 210-amino-acid chain: Calaxin (210 aa).

3 consecutive EF-hand domains span residues 64 to 99 (TDDM…FLRG), 100 to 135 (TLDE…SLIR), and 145 to 180 (GIKD…ENLL). Ca(2+) is bound by residues D77, D79, D81, Y83, E88, D113, N115, D117, Y119, E124, D158, D160, D162, R164, and D169.

As to quaternary structure, component of the outer dynein arm-docking complex along with ODAD1, ODAD2, ODAD3 and ODAD4.

It is found in the cytoplasm. It localises to the cytoskeleton. The protein resides in the cilium axoneme. The protein localises to the cell projection. Its subcellular location is the cilium. It is found in the flagellum. Its function is as follows. Component of the outer dynein arm-docking complex (ODA-DC) that mediates outer dynein arms (ODA) binding onto the doublet microtubule. Seems to regulate the assembly of both ODAs and their axonemal docking complex onto ciliary microtubules. Regulates ciliary and flagellar motility and is required for cilia-driven determination of body laterality. Functionally, regulates ciliary motility and is required for cilia-driven determination of body laterality. The polypeptide is Calaxin (clxn) (Danio rerio (Zebrafish)).